The following is a 125-amino-acid chain: Homeobox protein HD-8 (125 aa).

The homeobox DNA-binding region spans glutamate 30–glycine 89.

It is found in the nucleus. In Encephalitozoon cuniculi (strain GB-M1) (Microsporidian parasite), this protein is Homeobox protein HD-8 (HD-8).